The primary structure comprises 108 residues: NADH dehydrogenase [ubiquinone] 1 alpha subcomplex subunit 8-A (108 aa).

CHCH domains lie at 28–69 (GIRC…LKDL) and 70–108 (HQRC…CPLK). 3 short sequence motifs (cx9C motif) span residues 31 to 41 (CMPENMAFLKC), 51 to 61 (CLEKGRDVTRC), and 73 to 83 (CPKEMDAYVGC). Cystine bridges form between Cys-31–Cys-61, Cys-41–Cys-51, Cys-73–Cys-105, and Cys-83–Cys-94. A Cx10C motif motif is present at residues 94 to 105 (CRKEQEAFEKVC).

Belongs to the complex I NDUFA8 subunit family. In terms of assembly, complex I is composed of at least 49 different subunits.

The protein localises to the mitochondrion. It is found in the mitochondrion intermembrane space. In terms of biological role, accessory subunit of the mitochondrial membrane respiratory chain NADH dehydrogenase (Complex I), that is believed not to be involved in catalysis. Complex I functions in the transfer of electrons from NADH to the respiratory chain. The immediate electron acceptor for the enzyme is believed to be ubiquinone. The polypeptide is NADH dehydrogenase [ubiquinone] 1 alpha subcomplex subunit 8-A (Arabidopsis thaliana (Mouse-ear cress)).